Consider the following 604-residue polypeptide: Elongation factor 4 (604 aa).

Positions 7-189 constitute a tr-type G domain; the sequence is KNIRNFCIIA…QIVTKIPAPS (183 aa). GTP-binding positions include 19 to 24 and 136 to 139; these read DHGKST and NKID.

Belongs to the TRAFAC class translation factor GTPase superfamily. Classic translation factor GTPase family. LepA subfamily.

Its subcellular location is the cell membrane. The catalysed reaction is GTP + H2O = GDP + phosphate + H(+). Functionally, required for accurate and efficient protein synthesis under certain stress conditions. May act as a fidelity factor of the translation reaction, by catalyzing a one-codon backward translocation of tRNAs on improperly translocated ribosomes. Back-translocation proceeds from a post-translocation (POST) complex to a pre-translocation (PRE) complex, thus giving elongation factor G a second chance to translocate the tRNAs correctly. Binds to ribosomes in a GTP-dependent manner. This is Elongation factor 4 from Lachnospira eligens (strain ATCC 27750 / DSM 3376 / VPI C15-48 / C15-B4) (Eubacterium eligens).